The sequence spans 829 residues: Cation/H(+) antiporter 14 (829 aa).

A run of 12 helical transmembrane segments spans residues 48-68, 77-97, 117-137, 145-165, 180-200, 215-235, 240-260, 281-301, 329-349, 361-383, 392-412, and 425-445; these read YAMPLMLLQMSVIIITSRLLY, GMISAQVLAGIILGPSLFGQS, SNLGFFIHLFLLGLRIDASII, ILIGTASYALPFSLGNLTVLF, ISTVISLNAMTSFPVTTTVLA, NCSIVCEAFSWIVALVFRMFL, LASVWSFVWVTALILVIFFVC, IPFFPIIMVLLTISLTSEVLG, LEMFATSLMLPCFISISGLQT, IIEAVILITYGCKFLGTAAASAY, FSLALLMCCQGVIEIYTCVMW, and LLIITLLLVTGISRFLVVCLY. A Phosphoserine modification is found at Ser827.

Belongs to the monovalent cation:proton antiporter 2 (CPA2) transporter (TC 2.A.37) family. CHX (TC 2.A.37.4) subfamily. Preferentially expressed in pollen but also detected in vegetative tissues like leaf trichomes and root vascular tissues.

Its subcellular location is the membrane. Its function is as follows. May operate as a cation/H(+) antiporter. The chain is Cation/H(+) antiporter 14 (CHX14) from Arabidopsis thaliana (Mouse-ear cress).